The chain runs to 556 residues: Membrane protein insertase YidC (556 aa).

5 consecutive transmembrane segments (helical) span residues 6–26 (IVLY…WQID), 332–352 (LDLT…FSLM), 358–378 (VVGN…LAFY), 428–448 (LGGC…YWVL), and 501–521 (VMMF…SGLV).

This sequence belongs to the OXA1/ALB3/YidC family. Type 1 subfamily. Interacts with the Sec translocase complex via SecD. Specifically interacts with transmembrane segments of nascent integral membrane proteins during membrane integration.

The protein resides in the cell inner membrane. Required for the insertion and/or proper folding and/or complex formation of integral membrane proteins into the membrane. Involved in integration of membrane proteins that insert both dependently and independently of the Sec translocase complex, as well as at least some lipoproteins. Aids folding of multispanning membrane proteins. This Legionella pneumophila (strain Lens) protein is Membrane protein insertase YidC.